The primary structure comprises 239 residues: Geranylgeranylglyceryl phosphate synthase (239 aa).

2 residues coordinate Mg(2+): aspartate 18 and serine 45. Sn-glycerol 1-phosphate-binding positions include 166 to 172 (YLEAGSG), 197 to 198 (GG), and 219 to 220 (GT).

The protein belongs to the GGGP/HepGP synthase family. Group II subfamily. Requires Mg(2+) as cofactor.

Its subcellular location is the cytoplasm. The catalysed reaction is sn-glycerol 1-phosphate + (2E,6E,10E)-geranylgeranyl diphosphate = sn-3-O-(geranylgeranyl)glycerol 1-phosphate + diphosphate. Its pathway is membrane lipid metabolism; glycerophospholipid metabolism. In terms of biological role, prenyltransferase that catalyzes the transfer of the geranylgeranyl moiety of geranylgeranyl diphosphate (GGPP) to the C3 hydroxyl of sn-glycerol-1-phosphate (G1P). This reaction is the first ether-bond-formation step in the biosynthesis of archaeal membrane lipids. The polypeptide is Geranylgeranylglyceryl phosphate synthase (Pyrobaculum aerophilum (strain ATCC 51768 / DSM 7523 / JCM 9630 / CIP 104966 / NBRC 100827 / IM2)).